Reading from the N-terminus, the 299-residue chain is Tyrosine recombinase XerC (299 aa).

In terms of domain architecture, Core-binding (CB) spans 1–85 (MEQHLDAYCM…AVRGFYKYLN (85 aa)). A Tyr recombinase domain is found at 106 to 285 (RLPKTLDTDR…DFQHLATVYD (180 aa)). Residues R146, K170, H237, R240, and H263 contribute to the active site. Y272 (O-(3'-phospho-DNA)-tyrosine intermediate) is an active-site residue.

This sequence belongs to the 'phage' integrase family. XerC subfamily. Forms a cyclic heterotetrameric complex composed of two molecules of XerC and two molecules of XerD.

It localises to the cytoplasm. Functionally, site-specific tyrosine recombinase, which acts by catalyzing the cutting and rejoining of the recombining DNA molecules. The XerC-XerD complex is essential to convert dimers of the bacterial chromosome into monomers to permit their segregation at cell division. It also contributes to the segregational stability of plasmids. This Pseudomonas savastanoi pv. phaseolicola (strain 1448A / Race 6) (Pseudomonas syringae pv. phaseolicola (strain 1448A / Race 6)) protein is Tyrosine recombinase XerC.